Here is a 593-residue protein sequence, read N- to C-terminus: Meiotic recombination protein REC8 homolog (593 aa).

A Phosphoserine modification is found at S149. T164 carries the phosphothreonine modification. The residue at position 192 (S192) is a Phosphoserine. Disordered regions lie at residues 247–282, 317–344, and 422–444; these read QRRA…AQVE, ELRL…RRGR, and PQLE…RRKT. The span at 255-265 shows a compositional bias: basic and acidic residues; that stretch reads DESKEEPRALE. Residues 432–444 show a composition bias toward basic and acidic residues; that stretch reads EERVADKEERRKT.

The protein belongs to the rad21 family. Interacts (phosphorylated and unphosphorylated form) with SMC3. Interacts with SYCP3. Interacts (phosphorylated and unphosphorylated form) with SMC1B. Does not interact with SMC1A. Interacts with RAD51. Forms a complex with EWSR1, PRDM9, SYCP3 and SYCP1; complex formation is dependent of phosphorylated form of REC8 and requires PRDM9 bound to hotspot DNA; EWSR1 joins PRDM9 with the chromosomal axis through REC8. In terms of processing, phosphorylated.

It localises to the nucleus. The protein localises to the chromosome. The protein resides in the centromere. In terms of biological role, required during meiosis for separation of sister chromatids and homologous chromosomes. Proteolytic cleavage of REC8 on chromosome arms by separin during anaphase I allows for homologous chromosome separation in meiosis I and cleavage of REC8 on centromeres during anaphase II allows for sister chromatid separation in meiosis II. The polypeptide is Meiotic recombination protein REC8 homolog (Rattus norvegicus (Rat)).